The following is a 328-amino-acid chain: Alanine racemase (328 aa).

The Proton acceptor; specific for D-alanine role is filled by lysine 33. Lysine 33 is subject to N6-(pyridoxal phosphate)lysine. Residue arginine 118 participates in substrate binding. Tyrosine 237 acts as the Proton acceptor; specific for L-alanine in catalysis. Position 283 (methionine 283) interacts with substrate.

Belongs to the alanine racemase family. Pyridoxal 5'-phosphate is required as a cofactor.

It catalyses the reaction L-alanine = D-alanine. Its pathway is amino-acid biosynthesis; D-alanine biosynthesis; D-alanine from L-alanine: step 1/1. Catalyzes the interconversion of L-alanine and D-alanine. May also act on other amino acids. The protein is Alanine racemase (alr) of Campylobacter jejuni subsp. jejuni serotype O:6 (strain 81116 / NCTC 11828).